The following is a 218-amino-acid chain: Recombination protein RecR (218 aa).

Residues 56 to 71 (CRICCNISRDEVCRIC) form a C4-type zinc finger. The region spanning 79-195 (GLICVVEEPK…VVSRLASGMP (117 aa)) is the Toprim domain.

The protein belongs to the RecR family.

Functionally, may play a role in DNA repair. It seems to be involved in an RecBC-independent recombinational process of DNA repair. It may act with RecF and RecO. The sequence is that of Recombination protein RecR from Corynebacterium efficiens (strain DSM 44549 / YS-314 / AJ 12310 / JCM 11189 / NBRC 100395).